Consider the following 314-residue polypeptide: MARRRKGRPIDGVILLDKPTGMSSNDALQKVKRLYFAEKAGHTGALDPLATGMLPICLGEATKFSQFLLDSDKRYRVIAKLGERTDTSDSDGDVVETRPVNVTLETLEACIEKFRGESDQVPSMFSALKYQGKPLYEYARKGIEVPRESRKITVYEITLHRFEGEEVEMEVHCSKGTYIRTIVDDLGEMLGCGAHVTMLRRTGVAKYPYENMVTLEQLNELVDNANRDGVAPREVLDPLLMPMDTAVEDLPEVNLIADLADMVMHGQAVQVLGAPTEGQLRLTMGEERRFIGVGEMNRDGKIAPKRLVVFRDEE.

The active-site Nucleophile is the aspartate 47.

Belongs to the pseudouridine synthase TruB family. Type 1 subfamily.

It carries out the reaction uridine(55) in tRNA = pseudouridine(55) in tRNA. Functionally, responsible for synthesis of pseudouridine from uracil-55 in the psi GC loop of transfer RNAs. This chain is tRNA pseudouridine synthase B, found in Vibrio vulnificus (strain CMCP6).